The sequence spans 295 residues: Ribosomal RNA small subunit methyltransferase H (295 aa).

Residues 32–34, Asp50, Phe77, Asp98, and Gln105 each bind S-adenosyl-L-methionine; that span reads GGY. The segment at 275–295 is disordered; the sequence is KEISENTRSRSAKLRGIVKEE.

It belongs to the methyltransferase superfamily. RsmH family.

The protein resides in the cytoplasm. The enzyme catalyses cytidine(1402) in 16S rRNA + S-adenosyl-L-methionine = N(4)-methylcytidine(1402) in 16S rRNA + S-adenosyl-L-homocysteine + H(+). Specifically methylates the N4 position of cytidine in position 1402 (C1402) of 16S rRNA. The chain is Ribosomal RNA small subunit methyltransferase H from Anaplasma phagocytophilum (strain HZ).